Reading from the N-terminus, the 650-residue chain is Acetyl-coenzyme A synthetase (650 aa).

CoA is bound by residues 191–194, threonine 311, and asparagine 335; that span reads RGGR. Residues 387-389, 411-416, aspartate 500, and arginine 515 contribute to the ATP site; these read GEP and DTWWQT. Residue serine 523 coordinates CoA. Residue arginine 526 participates in ATP binding. Residues valine 537, histidine 539, and valine 542 each contribute to the Mg(2+) site. Arginine 584 lines the CoA pocket. An N6-acetyllysine modification is found at lysine 609.

This sequence belongs to the ATP-dependent AMP-binding enzyme family. Mg(2+) serves as cofactor. Acetylated. Deacetylation by the SIR2-homolog deacetylase activates the enzyme.

It catalyses the reaction acetate + ATP + CoA = acetyl-CoA + AMP + diphosphate. Its function is as follows. Catalyzes the conversion of acetate into acetyl-CoA (AcCoA), an essential intermediate at the junction of anabolic and catabolic pathways. AcsA undergoes a two-step reaction. In the first half reaction, AcsA combines acetate with ATP to form acetyl-adenylate (AcAMP) intermediate. In the second half reaction, it can then transfer the acetyl group from AcAMP to the sulfhydryl group of CoA, forming the product AcCoA. The sequence is that of Acetyl-coenzyme A synthetase from Shewanella sp. (strain MR-4).